Reading from the N-terminus, the 410-residue chain is UDP-N-acetylglucosamine--N-acetylmuramyl-(pentapeptide) pyrophosphoryl-undecaprenol N-acetylglucosamine transferase (410 aa).

The interval 1–34 is disordered; sequence MKDTVSQPAGGRGATAPRPADAASPSCGSSPSAD. The span at 14 to 34 shows a compositional bias: low complexity; that stretch reads ATAPRPADAASPSCGSSPSAD. UDP-N-acetyl-alpha-D-glucosamine-binding positions include 45–47, Asn167, Arg204, Ser238, and Gln334; that span reads TAG.

Belongs to the glycosyltransferase 28 family. MurG subfamily.

The protein localises to the cell membrane. The enzyme catalyses di-trans,octa-cis-undecaprenyl diphospho-N-acetyl-alpha-D-muramoyl-L-alanyl-D-glutamyl-meso-2,6-diaminopimeloyl-D-alanyl-D-alanine + UDP-N-acetyl-alpha-D-glucosamine = di-trans,octa-cis-undecaprenyl diphospho-[N-acetyl-alpha-D-glucosaminyl-(1-&gt;4)]-N-acetyl-alpha-D-muramoyl-L-alanyl-D-glutamyl-meso-2,6-diaminopimeloyl-D-alanyl-D-alanine + UDP + H(+). It functions in the pathway cell wall biogenesis; peptidoglycan biosynthesis. Functionally, cell wall formation. Catalyzes the transfer of a GlcNAc subunit on undecaprenyl-pyrophosphoryl-MurNAc-pentapeptide (lipid intermediate I) to form undecaprenyl-pyrophosphoryl-MurNAc-(pentapeptide)GlcNAc (lipid intermediate II). In Mycobacterium bovis (strain ATCC BAA-935 / AF2122/97), this protein is UDP-N-acetylglucosamine--N-acetylmuramyl-(pentapeptide) pyrophosphoryl-undecaprenol N-acetylglucosamine transferase.